The chain runs to 145 residues: MDPELQAIREARLAQLKNNSGGTNGDRNSGANNGGGENSAPVGAAIANFLEPQALERLSRVALVRRDRAQAVETYLKKLIATNNVTHKITEAEIVSILNGIAKQQNSQNNSKIIFERKDFSEDLNSFDKQNAKNDDDEDDDDFFD.

Position 1 is an N-acetylmethionine (Met1). Residues 15–41 (QLKNNSGGTNGDRNSGANNGGGENSAP) are disordered. Residues 16-27 (LKNNSGGTNGDR) show a composition bias toward polar residues. Ser121 and Ser126 each carry phosphoserine. The segment at 125 to 145 (NSFDKQNAKNDDDEDDDDFFD) is disordered. A compositionally biased stretch (acidic residues) spans 135 to 145 (DDDEDDDDFFD).

The protein belongs to the PDCD5 family.

This is an uncharacterized protein from Saccharomyces cerevisiae (strain ATCC 204508 / S288c) (Baker's yeast).